Here is a 214-residue protein sequence, read N- to C-terminus: Large ribosomal subunit protein uL16 (214 aa).

At Arg32 the chain carries Citrulline. Residue Lys175 forms a Glycyl lysine isopeptide (Lys-Gly) (interchain with G-Cter in SUMO2) linkage. Lys188 is covalently cross-linked (Glycyl lysine isopeptide (Lys-Gly) (interchain with G-Cter in ubiquitin)).

This sequence belongs to the universal ribosomal protein uL16 family. Component of the large ribosomal subunit. Mature ribosomes consist of a small (40S) and a large (60S) subunit. The 40S subunit contains about 33 different proteins and 1 molecule of RNA (18S). The 60S subunit contains about 49 different proteins and 3 molecules of RNA (28S, 5.8S and 5S). Post-translationally, citrullinated by PADI4. Ufmylated by UFL1.

It is found in the cytoplasm. In terms of biological role, component of the large ribosomal subunit. Plays a role in the formation of actively translating ribosomes. May play a role in the embryonic brain development. This chain is Large ribosomal subunit protein uL16, found in Homo sapiens (Human).